Consider the following 184-residue polypeptide: Thymidine kinase (184 aa).

Residues 10 to 17 (GPMYSGKT), His-53, and 83 to 86 (DEVQ) each bind ATP. Residue Glu-84 is the Proton acceptor of the active site. His-115 lines the substrate pocket. Residues Cys-140 and Cys-143 each contribute to the Zn(2+) site. Residues 161-164 (IDVG) and Tyr-169 each bind substrate. 2 residues coordinate Zn(2+): Cys-173 and Cys-176.

Belongs to the thymidine kinase family. As to quaternary structure, homotetramer.

Its subcellular location is the cytoplasm. The catalysed reaction is thymidine + ATP = dTMP + ADP + H(+). The sequence is that of Thymidine kinase (tdk) from Thermotoga maritima (strain ATCC 43589 / DSM 3109 / JCM 10099 / NBRC 100826 / MSB8).